A 258-amino-acid polypeptide reads, in one-letter code: Caffeoyl-CoA O-methyltransferase 1 (258 aa).

Over residues 1–16 the composition is skewed to low complexity; it reads MATTATEAAPAQEQQA. The disordered stretch occupies residues 1–31; the sequence is MATTATEAAPAQEQQANGNGEQKTRHSEVGH. A compositionally biased stretch (basic and acidic residues) spans 22–31; it reads QKTRHSEVGH. Lys-32 is a binding site for substrate. S-adenosyl-L-methionine contacts are provided by residues Thr-74, Glu-96, 98-99, Ser-104, Asp-122, and Ala-151; that span reads GV. Position 174 (Asp-174) interacts with substrate. A divalent metal cation is bound at residue Asp-174. Asp-176 is a binding site for S-adenosyl-L-methionine. Asp-200 and Asn-201 together coordinate a divalent metal cation. Substrate is bound at residue Asn-205.

This sequence belongs to the class I-like SAM-binding methyltransferase superfamily. Cation-dependent O-methyltransferase family. CCoAMT subfamily. A divalent metal cation serves as cofactor.

The enzyme catalyses (E)-caffeoyl-CoA + S-adenosyl-L-methionine = (E)-feruloyl-CoA + S-adenosyl-L-homocysteine + H(+). The protein operates within aromatic compound metabolism; phenylpropanoid biosynthesis. In terms of biological role, methylates caffeoyl-CoA to feruloyl-CoA and 5-hydroxyferuloyl-CoA to sinapoyl-CoA. Plays a role in the synthesis of feruloylated polysaccharides. Involved in the reinforcement of the plant cell wall. Also involved in the responding to wounding or pathogen challenge by the increased formation of cell wall-bound ferulic acid polymers. The polypeptide is Caffeoyl-CoA O-methyltransferase 1 (CCOAOMT1) (Zea mays (Maize)).